The chain runs to 248 residues: NADP-dependent 3-hydroxy acid dehydrogenase YdfG (248 aa).

NADP(+) contacts are provided by residues 7–12 (GATAGF), 32–33 (RR), 54–55 (DV), and N81. Residue S134 coordinates substrate. NADP(+) is bound by residues Y147, K151, and 177–185 (PGLVGGTEF). The Proton acceptor role is filled by Y147.

The protein belongs to the short-chain dehydrogenases/reductases (SDR) family. In terms of assembly, homotetramer.

The enzyme catalyses 3-hydroxypropanoate + NADP(+) = 3-oxopropanoate + NADPH + H(+). It catalyses the reaction L-allo-threonine + NADP(+) = aminoacetone + CO2 + NADPH. Functionally, NADP-dependent dehydrogenase with broad substrate specificity acting on 3-hydroxy acids. Catalyzes the NADP-dependent oxidation of L-allo-threonine to L-2-amino-3-keto-butyrate, which is spontaneously decarboxylated into aminoacetone. Also acts on D-threonine, L-serine, D-serine, D-3-hydroxyisobutyrate, L-3-hydroxyisobutyrate, D-glycerate and L-glycerate. Able to catalyze the reduction of the malonic semialdehyde to 3-hydroxypropionic acid. YdfG is apparently supplementing RutE, the presumed malonic semialdehyde reductase involved in pyrimidine degradation since both are able to detoxify malonic semialdehyde. The sequence is that of NADP-dependent 3-hydroxy acid dehydrogenase YdfG from Shigella flexneri.